Consider the following 118-residue polypeptide: Hydrogenase maturation factor HypA (118 aa).

Position 2 (His2) interacts with Ni(2+). Zn(2+) contacts are provided by Cys73, Cys76, Cys93, and Cys96.

It belongs to the HypA/HybF family.

Involved in the maturation of [NiFe] hydrogenases. Required for nickel insertion into the metal center of the hydrogenase. In Lawsonia intracellularis (strain PHE/MN1-00), this protein is Hydrogenase maturation factor HypA.